The following is a 374-amino-acid chain: tRNA (adenine(58)-N(1))-methyltransferase catalytic subunit TRM61 (374 aa).

Residues 120-122 (SGS), E138, R143, 167-168 (DV), and D202 contribute to the S-adenosyl-L-methionine site.

This sequence belongs to the class I-like SAM-binding methyltransferase superfamily. TRM61 family. Heterotetramer; composed of two copies of TRM6 and two copies of TRM61.

It localises to the nucleus. It carries out the reaction adenosine(58) in tRNA + S-adenosyl-L-methionine = N(1)-methyladenosine(58) in tRNA + S-adenosyl-L-homocysteine + H(+). In terms of biological role, catalytic subunit of tRNA (adenine-N(1)-)-methyltransferase, which catalyzes the formation of N(1)-methyladenine at position 58 (m1A58) in initiator methionyl-tRNA. The sequence is that of tRNA (adenine(58)-N(1))-methyltransferase catalytic subunit TRM61 (TRM61) from Candida glabrata (strain ATCC 2001 / BCRC 20586 / JCM 3761 / NBRC 0622 / NRRL Y-65 / CBS 138) (Yeast).